Consider the following 331-residue polypeptide: Protein PER1 homolog (331 aa).

The signal sequence occupies residues 1 to 24; the sequence is MRVLRNFTIFFLFTALSLFRQISA. The Lumenal portion of the chain corresponds to 25–100; it reads SAGDLHPVYV…QYHGKWYFIR (76 aa). A helical membrane pass occupies residues 101–121; the sequence is VFGIQELFSVFFSMLNFMIHY. Over 122–139 the chain is Cytoplasmic; the sequence is NGYHIMRRCIPDEHPAKR. A helical membrane pass occupies residues 140 to 160; the sequence is LCLSWAIVGMNAWVWSSVFHI. The Lumenal segment spans residues 161-168; sequence RDTPITEK. Residues 169-189 traverse the membrane as a helical segment; sequence LDYFSAGAFVLFGSYCTLILM. At 190 to 199 the chain is on the cytoplasmic side; that stretch reads LRLDQLPGGK. Residues 200–220 traverse the membrane as a helical segment; sequence LLCWIIGVIFIAAFIAHVSYL. Topologically, residues 221 to 232 are lumenal; it reads SFYSFDYGYNMK. The helical transmembrane segment at 233–250 threads the bilayer; it reads ANVAVGLVQNILWYYYSW. Residues 251-263 lie on the Cytoplasmic side of the membrane; that stretch reads SNRNSGLYWTRWP. The helical transmembrane segment at 264–284 threads the bilayer; sequence AYIVTSLMLATSLELFDFSPI. Over 285 to 289 the chain is Lumenal; that stretch reads ANLID. The helical transmembrane segment at 290-310 threads the bilayer; that stretch reads AHALWHLSTVPITHYLYGFVV. The Cytoplasmic portion of the chain corresponds to 311-331; that stretch reads RKCSYDLTKGTFKIKAYDSSR.

Belongs to the PGAP3/PER1 family.

It is found in the endoplasmic reticulum membrane. The protein localises to the vacuole membrane. Its function is as follows. Involved in the lipid remodeling steps of GPI-anchor maturation. Lipid remodeling steps consist in the generation of 2 saturated fatty chains at the sn-2 position of GPI-anchors proteins. Required for phospholipase A2 activity that removes an acyl-chain at the sn-2 position of GPI-anchors during the remodeling of GPI. Required for efficient transport of GPI-anchor proteins. The protein is Protein PER1 homolog of Schizosaccharomyces pombe (strain 972 / ATCC 24843) (Fission yeast).